The primary structure comprises 353 residues: Mannonate dehydratase (353 aa).

This sequence belongs to the mannonate dehydratase family. It depends on Fe(2+) as a cofactor. Requires Mn(2+) as cofactor.

The enzyme catalyses D-mannonate = 2-dehydro-3-deoxy-D-gluconate + H2O. It functions in the pathway carbohydrate metabolism; pentose and glucuronate interconversion. In terms of biological role, catalyzes the dehydration of D-mannonate. The chain is Mannonate dehydratase from Burkholderia cenocepacia (strain ATCC BAA-245 / DSM 16553 / LMG 16656 / NCTC 13227 / J2315 / CF5610) (Burkholderia cepacia (strain J2315)).